Consider the following 2034-residue polypeptide: Pecanex-like protein 3 (2034 aa).

Helical transmembrane passes span 33-53 (CFHLYVWIFLLIFPFLLYMVL) and 54-74 (PPSLMVAGVYCLVVAVIFATI). The segment at 96–118 (STMGELEEEPAQGDSNPPRDPGV) is disordered. Ser-127 is modified (phosphoserine). Thr-129 is subject to Phosphothreonine. Disordered stretches follow at residues 193-242 (IGDL…PLLK), 260-517 (DRAL…LRPP), and 540-625 (VLPA…SHSR). Residues 294-303 (KAGSSDSCFS) show a composition bias toward polar residues. Positions 305–319 (TDRETLSSFKSEKTN) are enriched in basic and acidic residues. The N-linked (GlcNAc...) asparagine glycan is linked to Asn-319. The residue at position 370 (Thr-370) is a Phosphothreonine. The segment covering 391 to 409 (PSKRQPPLRRHSPPGRAPR) has biased composition (basic residues). 2 positions are modified to phosphoserine: Ser-392 and Ser-431. Positions 427–436 (GSELSPASSL) are enriched in polar residues. The span at 444 to 460 (TDSSSSTSCYSPESSRG) shows a compositional bias: low complexity. Polar residues predominate over residues 488 to 497 (TQRTPSTASA). A Phosphoserine modification is found at Ser-505. 7 helical membrane passes run 790–812 (VLENIFGVGLSSLVAFLGYLLLL), 819–836 (IWVFQFCLVIASCQYSLL), 852–872 (WVIAYSRPVYFCICCLLIWLL), 880–900 (PFPPVSLYGLTLFSASFFFCA), 903–923 (VATVFTLCFPFVFLLGLLPQV), 946–968 (SPLTAVFSLSRSLLAAALLYGFC), and 980–1000 (HVPVLFSVFCGLLVALSYHLS). Ser-1025 is subject to Phosphoserine. The next 4 helical transmembrane spans lie at 1053–1073 (LVMCVVIAVLTFAISASTVFI), 1078–1098 (VLGFVLYALAGAVGFFTHYLL), 1244–1264 (FVLTYIAPWQITWGSAFHAFA), and 1280–1300 (LLSGLFSTPLNPLLGSAVFIM). At Ser-1697 the chain carries Phosphoserine. Asn-1770 is a glycosylation site (N-linked (GlcNAc...) asparagine). The disordered stretch occupies residues 1844 to 2034 (GGLTSLSNNP…AAQPLLEHQY (191 aa)). Residues 1890-1910 (RPPPLLQWPPPRLPGPPPASP) are compositionally biased toward pro residues. Residue Ser-1909 is modified to Phosphoserine. A compositionally biased stretch (low complexity) spans 1925–1939 (GLLSSEGPSGKWSLG). Position 1955 is a phosphoserine (Ser-1955). The span at 1969-1978 (LSLSLSLSLS) shows a compositional bias: low complexity.

This sequence belongs to the pecanex family.

The protein resides in the membrane. The sequence is that of Pecanex-like protein 3 from Homo sapiens (Human).